The primary structure comprises 243 residues: Probable transcriptional regulatory protein LCA_1307 (243 aa).

A disordered region spans residues 1–21; sequence MSGHSKWHNIQGRKNAQDAKR.

The protein belongs to the TACO1 family.

The protein resides in the cytoplasm. This chain is Probable transcriptional regulatory protein LCA_1307, found in Latilactobacillus sakei subsp. sakei (strain 23K) (Lactobacillus sakei subsp. sakei).